Consider the following 438-residue polypeptide: Methyl-coenzyme M reductase subunit beta (438 aa).

Tyrosine 367 provides a ligand contact to coenzyme M. Residue glycine 369 participates in coenzyme B binding.

It belongs to the methyl-coenzyme M reductase beta subunit family. MCR is a hexamer of two alpha, two beta, and two gamma chains, forming a dimer of heterotrimers. It depends on coenzyme F430 as a cofactor.

It is found in the cytoplasm. It catalyses the reaction coenzyme B + methyl-coenzyme M = methane + coenzyme M-coenzyme B heterodisulfide. It participates in one-carbon metabolism; methyl-coenzyme M reduction; methane from methyl-coenzyme M: step 1/1. Functionally, component of the methyl-coenzyme M reductase (MCR) I that catalyzes the reductive cleavage of methyl-coenzyme M (CoM-S-CH3 or 2-(methylthio)ethanesulfonate) using coenzyme B (CoB or 7-mercaptoheptanoylthreonine phosphate) as reductant which results in the production of methane and the mixed heterodisulfide of CoB and CoM (CoM-S-S-CoB). This is the final step in methanogenesis. This chain is Methyl-coenzyme M reductase subunit beta (mcrB), found in Methanothermus fervidus.